A 373-amino-acid polypeptide reads, in one-letter code: Glutamate 5-kinase (373 aa).

Residue K16 participates in ATP binding. Residues S56, D143, and N155 each contribute to the substrate site. 175 to 176 (TD) contributes to the ATP binding site. Positions 281-359 (RGVVTLDDGA…TKIETLLGYK (79 aa)) constitute a PUA domain.

The protein belongs to the glutamate 5-kinase family.

The protein resides in the cytoplasm. It carries out the reaction L-glutamate + ATP = L-glutamyl 5-phosphate + ADP. Its pathway is amino-acid biosynthesis; L-proline biosynthesis; L-glutamate 5-semialdehyde from L-glutamate: step 1/2. In terms of biological role, catalyzes the transfer of a phosphate group to glutamate to form L-glutamate 5-phosphate. The polypeptide is Glutamate 5-kinase (Teredinibacter turnerae (strain ATCC 39867 / T7901)).